Reading from the N-terminus, the 188-residue chain is MDRVPREEFVPEDVRPDAYYDTPLPIGHNQTISAPSMVAIMCQALDIREGNKVLEIGTGLGYHAAVMAVLAGASGVVYTVERIPELADMARSVLSRLGFDNVKVFLRDGTEGLPDFAPYDRISVAAAAPDVPQPLVDQLKDPGRLVIPVGRYFQQLMLVEKKGGQIITTDKGGVAFVPLLGKYGFKGY.

Serine 33 is a catalytic residue.

Belongs to the methyltransferase superfamily. L-isoaspartyl/D-aspartyl protein methyltransferase family.

Its subcellular location is the cytoplasm. It catalyses the reaction [protein]-L-isoaspartate + S-adenosyl-L-methionine = [protein]-L-isoaspartate alpha-methyl ester + S-adenosyl-L-homocysteine. Functionally, catalyzes the methyl esterification of L-isoaspartyl residues in peptides and proteins that result from spontaneous decomposition of normal L-aspartyl and L-asparaginyl residues. It plays a role in the repair and/or degradation of damaged proteins. The protein is Protein-L-isoaspartate O-methyltransferase of Methanocella arvoryzae (strain DSM 22066 / NBRC 105507 / MRE50).